The primary structure comprises 182 residues: Large ribosomal subunit protein uL5 (182 aa).

The protein belongs to the universal ribosomal protein uL5 family. Part of the 50S ribosomal subunit; part of the 5S rRNA/L5/L18/L25 subcomplex. Contacts the 5S rRNA and the P site tRNA. Forms a bridge to the 30S subunit in the 70S ribosome.

Functionally, this is one of the proteins that bind and probably mediate the attachment of the 5S RNA into the large ribosomal subunit, where it forms part of the central protuberance. In the 70S ribosome it contacts protein S13 of the 30S subunit (bridge B1b), connecting the 2 subunits; this bridge is implicated in subunit movement. Contacts the P site tRNA; the 5S rRNA and some of its associated proteins might help stabilize positioning of ribosome-bound tRNAs. The sequence is that of Large ribosomal subunit protein uL5 from Coxiella burnetii (strain CbuG_Q212) (Coxiella burnetii (strain Q212)).